Here is a 229-residue protein sequence, read N- to C-terminus: Thymidylate kinase (229 aa).

Position 9–16 (9–16 (GPEGSGKS)) interacts with ATP.

Belongs to the thymidylate kinase family.

It catalyses the reaction dTMP + ATP = dTDP + ADP. Phosphorylation of dTMP to form dTDP in both de novo and salvage pathways of dTTP synthesis. This chain is Thymidylate kinase, found in Roseiflexus castenholzii (strain DSM 13941 / HLO8).